Consider the following 244-residue polypeptide: 5-oxoprolinase subunit A (244 aa).

Belongs to the LamB/PxpA family. As to quaternary structure, forms a complex composed of PxpA, PxpB and PxpC.

It catalyses the reaction 5-oxo-L-proline + ATP + 2 H2O = L-glutamate + ADP + phosphate + H(+). Its function is as follows. Catalyzes the cleavage of 5-oxoproline to form L-glutamate coupled to the hydrolysis of ATP to ADP and inorganic phosphate. The sequence is that of 5-oxoprolinase subunit A from Shigella boydii serotype 18 (strain CDC 3083-94 / BS512).